The following is a 457-amino-acid chain: Peptidyl-prolyl cis-trans isomerase FKBP5 (457 aa).

Met-1 is modified (N-acetylmethionine). The tract at residues 1–26 (MTTDEGAKNNGESPTATVAEQGEDIT) is disordered. Residue Ser-13 is modified to Phosphoserine. PPIase FKBP-type domains are found at residues 50–138 (GDKV…LDFK) and 165–251 (GATV…KSFE). TPR repeat units lie at residues 268-301 (AAIV…LEME), 317-350 (LAAF…DSAN), and 351-384 (GKGL…NPQN). The tract at residues 420-457 (DAKEEANKAMGKKTSEGVTNEKGTDSQAMEEEKPEGHV) is disordered. A Phosphoserine modification is found at Ser-445.

In terms of assembly, part of a heteromultimeric cytoplasmic complex with HSP90AA1, HSPA1A/HSPA1B and steroid receptors. Upon ligand binding dissociates from the complex and FKBP4 takes its place. Interacts with functionally mature heterooligomeric progesterone receptor complexes along with HSP90 and TEBP. Interacts with IFI44L; this interaction modulates the kinase activity of IKBKB and IKBKE. Interacts with IKBKB and IKBKE.

Its subcellular location is the cytoplasm. It localises to the nucleus. It carries out the reaction [protein]-peptidylproline (omega=180) = [protein]-peptidylproline (omega=0). With respect to regulation, inhibited by FK506 but not cyclosporin. Functionally, immunophilin protein with PPIase and co-chaperone activities. Component of unligated steroid receptors heterocomplexes through interaction with heat-shock protein 90 (HSP90). Plays a role in the intracellular trafficking of heterooligomeric forms of steroid hormone receptors maintaining the complex into the cytoplasm when unliganded. Acts as a regulator of Akt/AKT1 activity by promoting the interaction between Akt/AKT1 and PHLPP1, thereby enhancing dephosphorylation and subsequent activation of Akt/AKT1. Interacts with IKBKE and IKBKB which facilitates IKK complex assembly leading to increased IKBKE and IKBKB kinase activity, NF-kappaB activation, and IFN production. This chain is Peptidyl-prolyl cis-trans isomerase FKBP5 (FKBP5), found in Pongo abelii (Sumatran orangutan).